We begin with the raw amino-acid sequence, 532 residues long: Pre-piRNA 3'-exonuclease trimmer (532 aa).

Mg(2+)-binding residues include D28, E30, D270, and D365. Residues 503-523 (AGRFAIWSGSIVTGGLALYLI) form a helical membrane-spanning segment.

It belongs to the CAF1 family. As to quaternary structure, interacts with Papi/Tdrkh; interaction takes place on the mitochondrial surface and recruits PNLDC1/trimmer to PIWI-bound pre-piRNAs. Mg(2+) serves as cofactor.

The protein resides in the mitochondrion outer membrane. In terms of biological role, 3'-5' exonuclease that specifically cleaves precursor piRNAs (pre-piRNAs) at their 3' ends. Trims pre-piRNAs to their mature size, a process required for piRNAs maturation and stabilization, and subsequent pre-piRNAs 2'-O-methylation. The piRNA metabolic process mediates the repression of transposable elements during meiosis by forming complexes composed of piRNAs and Piwi proteins and govern the methylation and subsequent repression of transposons. This chain is Pre-piRNA 3'-exonuclease trimmer, found in Bombyx mori (Silk moth).